Reading from the N-terminus, the 144-residue chain is Large ribosomal subunit protein uL15 (144 aa).

A disordered region spans residues 1 to 52 (MRLNTLSPAEGAKHAPKRVGRGIGSGLGKTGGRGHKGQKSRSGGGVRRGFEG). The span at 21–31 (RGIGSGLGKTG) shows a compositional bias: gly residues.

This sequence belongs to the universal ribosomal protein uL15 family. As to quaternary structure, part of the 50S ribosomal subunit.

Binds to the 23S rRNA. This Buchnera aphidicola subsp. Acyrthosiphon kondoi (Acyrthosiphon kondoi symbiotic bacterium) protein is Large ribosomal subunit protein uL15.